We begin with the raw amino-acid sequence, 405 residues long: MIQWFLKYRPRSLKDVENQDGAKKELQEWIESWLNGKPNAKAVLLHGPPGVGKTTLAEALAHDYNLELLEMNASDSRKLQDIKSVAEKASVYGSIFGTRGKLILLDEVDGINVREDTGAIQGILELIEKTKYPLIMTANDPWNPALRELRNKTKMVGLNKLGKYPLRRLLKKICQAEKIICDDEALNYIIDTSEGDARYAINMLQGIGEGYGKVTLDLVEAMARRKERELDPFETLRDIFWARYAWQAKNAATSAQIDYDMLIRWISENIPIQYDNIEDVWRAFDALSRASIFLKRAKGGDWDLLSYAYDLMSSGVAAAEIEKKKPNWKPKWKKYQFPSYIQLLSKSKDIRDTRDEIIKKLAIHSSFNKTLNDTYPFFLIFYKKYDKRLSLNTKEKEYLNSASKS.

G47 to T54 serves as a coordination point for ATP.

The protein belongs to the activator 1 small subunits family. RfcL subfamily. In terms of assembly, heteromultimer composed of small subunits (RfcS) and large subunits (RfcL).

Part of the RFC clamp loader complex which loads the PCNA sliding clamp onto DNA. The sequence is that of Replication factor C large subunit from Saccharolobus islandicus (strain M.16.27) (Sulfolobus islandicus).